The following is a 658-amino-acid chain: Integrator complex subunit 9 (658 aa).

A Glycyl lysine isopeptide (Lys-Gly) (interchain with G-Cter in SUMO2) cross-link involves residue lysine 58. The interval 548–573 is disordered; it reads DNKHVLQPPPRPTQPTGGKKRKRASD. The Nuclear localization signal signature appears at 566 to 570; that stretch reads KKRKR.

This sequence belongs to the metallo-beta-lactamase superfamily. RNA-metabolizing metallo-beta-lactamase-like family. INTS9 subfamily. Component of the Integrator complex, composed of core subunits INTS1, INTS2, INTS3, INTS4, INTS5, INTS6, INTS7, INTS8, INTS9/RC74, INTS10, INTS11/CPSF3L, INTS12, INTS13, INTS14 and INTS15. The core complex associates with protein phosphatase 2A subunits PPP2CA and PPP2R1A, to form the Integrator-PP2A (INTAC) complex. INTS9 is part of the RNA endonuclease subcomplex, composed of INTS4, INTS9, INTS11 and inositol hexakisphosphate (InsP6). Interacts with WDR73; interaction is required for the assembly of the RNA endonuclease subcomplex in the cytoplasm. Interacts with BRAT1; interaction is required for the assembly of the RNA endonuclease subcomplex. Interacts with ESRRB, ESRRB is not a core component of the Integrator complex and this association is a bridge for the interaction with the multiprotein complex Integrator; attracts the transcriptional machinery.

Its subcellular location is the nucleus. It is found in the cytoplasm. Functionally, component of the integrator complex, a multiprotein complex that terminates RNA polymerase II (Pol II) transcription in the promoter-proximal region of genes. The integrator complex provides a quality checkpoint during transcription elongation by driving premature transcription termination of transcripts that are unfavorably configured for transcriptional elongation: the complex terminates transcription by (1) catalyzing dephosphorylation of the C-terminal domain (CTD) of Pol II subunit POLR2A/RPB1 and SUPT5H/SPT5, (2) degrading the exiting nascent RNA transcript via endonuclease activity and (3) promoting the release of Pol II from bound DNA. The integrator complex is also involved in terminating the synthesis of non-coding Pol II transcripts, such as enhancer RNAs (eRNAs), small nuclear RNAs (snRNAs), telomerase RNAs and long non-coding RNAs (lncRNAs). Mediates recruitment of cytoplasmic dynein to the nuclear envelope, probably as component of the integrator complex. This Bos taurus (Bovine) protein is Integrator complex subunit 9 (INTS9).